The following is a 561-amino-acid chain: Putative transport protein KPK_3686 (561 aa).

5 helical membrane passes run 8–28 (LLNGNYILLLFVVLALGLCLG), 37–57 (LGNSIGVLVVSLLLGQQHFAI), 66–86 (FMLFIFCVGVEAGPNFFSIFF), 94–114 (MLALVMVGSAMLIATVLGKVF), and 158–178 (HLSLGYALTYLVGLVSLIVGA). 2 RCK C-terminal domains span residues 202–288 (LDTD…SFRN) and 292–373 (VFDR…RIGF). Helical transmembrane passes span 383 to 403 (LLAFCAFFIVGLMIGMITFQF), 406 to 426 (FSFGIGNAAGLLFAGIMLGFL), 447 to 467 (FGLMVFMAGVGLSAGAGINNG), 478 to 498 (AGLIVSLLPVVICFLFGAYVL), and 540 to 560 (AIANVLLTLAGTLIVIIWPGL).

It belongs to the AAE transporter (TC 2.A.81) family. YbjL subfamily.

The protein localises to the cell membrane. This chain is Putative transport protein KPK_3686, found in Klebsiella pneumoniae (strain 342).